Reading from the N-terminus, the 265-residue chain is UPF0246 protein NT01EI_0662 (265 aa).

Belongs to the UPF0246 family.

This is UPF0246 protein NT01EI_0662 from Edwardsiella ictaluri (strain 93-146).